The chain runs to 486 residues: F-box protein At1g80960 (486 aa).

One can recognise an F-box domain in the interval V49–R97.

The polypeptide is F-box protein At1g80960 (Arabidopsis thaliana (Mouse-ear cress)).